The following is a 356-amino-acid chain: Fructose-1,6-bisphosphatase class 1 (356 aa).

Residues E91, D113, L115, and D116 each coordinate Mg(2+). Substrate contacts are provided by residues 116 to 119 and N208; that span reads DGSS. E280 is a binding site for Mg(2+).

Belongs to the FBPase class 1 family. Homotetramer. Mg(2+) serves as cofactor.

The protein resides in the cytoplasm. It carries out the reaction beta-D-fructose 1,6-bisphosphate + H2O = beta-D-fructose 6-phosphate + phosphate. It participates in carbohydrate biosynthesis; gluconeogenesis. The chain is Fructose-1,6-bisphosphatase class 1 from Methylacidiphilum infernorum (isolate V4) (Methylokorus infernorum (strain V4)).